The following is a 385-amino-acid chain: Chaperone protein DnaJ (385 aa).

The region spanning 5-72 (DYYEVLGVGK…QKRAAYDQFG (68 aa)) is the J domain. A disordered region spans residues 26 to 48 (RKLAMKHHPDRNQGDGAKASEEK). The span at 35–48 (DRNQGDGAKASEEK) shows a compositional bias: basic and acidic residues. Residues 145–223 (GKESQIRIPT…CNGAGKVKKQ (79 aa)) form a CR-type zinc finger. Zn(2+)-binding residues include C158, C161, C175, C178, C197, C200, C211, and C214. CXXCXGXG motif repeat units follow at residues 158-165 (CDTCHGSG), 175-182 (CTTCHGAG), 197-204 (CPHCHGSG), and 211-218 (CTSCNGAG). The interval 362–385 (FRKGGDKHSPTSKSWTDRVKDLFK) is disordered.

This sequence belongs to the DnaJ family. As to quaternary structure, homodimer. Zn(2+) serves as cofactor.

It localises to the cytoplasm. In terms of biological role, participates actively in the response to hyperosmotic and heat shock by preventing the aggregation of stress-denatured proteins and by disaggregating proteins, also in an autonomous, DnaK-independent fashion. Unfolded proteins bind initially to DnaJ; upon interaction with the DnaJ-bound protein, DnaK hydrolyzes its bound ATP, resulting in the formation of a stable complex. GrpE releases ADP from DnaK; ATP binding to DnaK triggers the release of the substrate protein, thus completing the reaction cycle. Several rounds of ATP-dependent interactions between DnaJ, DnaK and GrpE are required for fully efficient folding. Also involved, together with DnaK and GrpE, in the DNA replication of plasmids through activation of initiation proteins. This Leptothrix cholodnii (strain ATCC 51168 / LMG 8142 / SP-6) (Leptothrix discophora (strain SP-6)) protein is Chaperone protein DnaJ.